Here is a 681-residue protein sequence, read N- to C-terminus: MMENGIWKDALIQSMKKLSPKLQVKNPVMLLVYVGAILATSLYFLGFFGISDEKAGYTLAIALILWFTVLFANFAEAIAEGRGRAQADSLKMARKDVLARKLKNLEDKSDVIEVASNDLKKGDIVYVLANEQIPMDGEVIEGAASVDESAITGESAPVIRESGGDRSAVTGGTTLVSDWLVIRVTAVSGESFLDKMIAMVEGASRKKTPNEIALQILLVTLSIIFLAVSATLLPFTEFASKQAGAGSAISITNVIALLVCLAPTTIGALLSSIGIAGMSRLNQANVLAMSGRAIEAAGDVDVLLLDKTGTITLGNRKASEFLPVDGVTEQELADAAQLSSIADETAEGRSIVVLAKERFDIRGRDFAEMHAEFVPFTATTRMSGIDYQGNTIRKGAADAVRAYVSANGGTYPKECDTIVSKVAGAGGTPLVVVRNNKVLGVIYLKDIVKNGVKERFLDLRKMGIKTIMITGDNPMTAAAIAAEAGVDDFLAEATPEAKLELIREYQREGHLVAMTGDGTNDAPALAQADVAVAMNTGTQAAKEAGNMVDLDSSPTKLIDIVRIGKQLLMTRGALTTFSVANDLAKYFAIIPVLFYGIFPQLEALNLMDLTSPTSAILSAIIYNAVIIIFLIPLSLKGVKYREMPAGKLLSRNMLIYGLGGLIAPFIAIKLIDMLLTVLGIV.

The next 4 membrane-spanning stretches (helical) occupy residues 30–50 (LLVYVGAILATSLYFLGFFGI), 59–79 (LAIALILWFTVLFANFAEAIA), 216–236 (ILLVTLSIIFLAVSATLLPFT), and 255–275 (IALLVCLAPTTIGALLSSIGI). Aspartate 306 acts as the 4-aspartylphosphate intermediate in catalysis. Residues aspartate 343, glutamate 347, 376–383 (FTATTRMS), and lysine 394 each bind ATP. Mg(2+)-binding residues include aspartate 517 and aspartate 521. Transmembrane regions (helical) follow at residues 587-607 (FAIIPVLFYGIFPQLEALNLM), 615-635 (AILSAIIYNAVIIIFLIPLSL), and 661-681 (LIAPFIAIKLIDMLLTVLGIV).

Belongs to the cation transport ATPase (P-type) (TC 3.A.3) family. Type IA subfamily. In terms of assembly, the system is composed of three essential subunits: KdpA, KdpB and KdpC.

The protein resides in the cell membrane. It carries out the reaction K(+)(out) + ATP + H2O = K(+)(in) + ADP + phosphate + H(+). Part of the high-affinity ATP-driven potassium transport (or Kdp) system, which catalyzes the hydrolysis of ATP coupled with the electrogenic transport of potassium into the cytoplasm. This subunit is responsible for energy coupling to the transport system and for the release of the potassium ions to the cytoplasm. This is Potassium-transporting ATPase ATP-binding subunit 1 from Listeria innocua serovar 6a (strain ATCC BAA-680 / CLIP 11262).